Here is a 320-residue protein sequence, read N- to C-terminus: Cytochrome f (320 aa).

An N-terminal signal peptide occupies residues 1–35 (MQTRNAFSWIKKEITRSISVLLMIYIITRAPISNA). Positions 36, 56, 59, and 60 each coordinate heme. Residues 286–305 (VQGLLLFLASIILAQILLVL) form a helical membrane-spanning segment.

It belongs to the cytochrome f family. As to quaternary structure, the 4 large subunits of the cytochrome b6-f complex are cytochrome b6, subunit IV (17 kDa polypeptide, petD), cytochrome f and the Rieske protein, while the 4 small subunits are PetG, PetL, PetM and PetN. The complex functions as a dimer. The cofactor is heme.

It is found in the plastid. The protein localises to the chloroplast thylakoid membrane. Component of the cytochrome b6-f complex, which mediates electron transfer between photosystem II (PSII) and photosystem I (PSI), cyclic electron flow around PSI, and state transitions. This Pisum sativum (Garden pea) protein is Cytochrome f (petA).